A 314-amino-acid polypeptide reads, in one-letter code: Trihelix transcription factor ASR3 (314 aa).

The segment at 1–34 (MALEQLGLGVSAVDGGENSSAPSNDGGDDGVKTA) is disordered. In terms of domain architecture, Myb-like spans 38–104 (RWTRQEILVL…QCRKRWSNLA (67 aa)). The Nuclear localization signal motif lies at 84–91 (CKRHGVNR). Residues 161-165 (LSLGL) carry the EAR 1 motif. Phosphothreonine; by MAPK4 is present on threonine 189. Residues 207-255 (CVADQGRVKEKQPEAANVEGGSTSQEERKRKRTSFGEKEEEEEEGETKK) form a disordered region. Residues 280-284 (LNLKL) carry the EAR 2 motif.

As to quaternary structure, homodimer. Interacts directly with MPK4. Post-translationally, phosphorylated on Thr-189 by MPK4 in response to microbe-associated molecular patterns (MAMPs, e.g. flg22, elf18, chitin, and LPS). This phosphorylation enhances DNA-binding and thus negatively regulates immune gene expression.

The protein resides in the nucleus. Functionally, transcriptional repressor that binds DNA and plays a negative role in regulating microbe-associated molecular patterns-(MAMPs, e.g. flg22, elf18, chitin, and LPS) triggered immunity (PTI) by negatively regulating immune gene expression. This Arabidopsis thaliana (Mouse-ear cress) protein is Trihelix transcription factor ASR3.